The following is a 547-amino-acid chain: MAAKDVKFSQDARDRMLRGVDILANAVKVTLGPKGRNVLIERSFGAPRITKDGVTVAKEIQLEDKFENMGAQMLREVASKTNDLAGDGTTTATVLAQSIVREGAKAVAAGMNPMDLKRGIEIAVAAVVKDIEKRAKPVASSAEIAQVGTISSNGDAAIGKMIAQAMQKVGNEGVITVEENKSLTTEVDIVEGMKFDRGYLSPYFVTNAEKMAVEFDDAYVLLHEKKVSGLQSMLPLLEAVVQAGKPLVIIAEDVEGEALATLVVNRLRGGLKVAAVKAPGFGDRRKAMMEDIAILTGGQLISDDLGMKLENVTLKMLGRAKKVVIDKENTTIVGGAGKKADIESRVGQIKAQIEETSSDYDREKLQERLAKLAGGVAVIRVGGATEVEVKEKKDRVEDALNATRAAVQEGIVPGGGVALLRAKKAVGRINNDNADVQAGINIVLKALEAPIRQIAENAGVEGSIVVGKILENKSETFGFDAQTEEYVDMLAKGIVDPAKVVRTALQDAASVSALLVTTEAMVAELPRDAAPAMPGGGGMGGMGGMGF.

Residues 30–33, lysine 51, 87–91, glycine 415, and aspartate 496 each bind ATP; these read TLGP and DGTTT.

Belongs to the chaperonin (HSP60) family. As to quaternary structure, forms a cylinder of 14 subunits composed of two heptameric rings stacked back-to-back. Interacts with the co-chaperonin GroES.

Its subcellular location is the cytoplasm. It catalyses the reaction ATP + H2O + a folded polypeptide = ADP + phosphate + an unfolded polypeptide.. Together with its co-chaperonin GroES, plays an essential role in assisting protein folding. The GroEL-GroES system forms a nano-cage that allows encapsulation of the non-native substrate proteins and provides a physical environment optimized to promote and accelerate protein folding. This Rhodopseudomonas palustris (strain BisA53) protein is Chaperonin GroEL 1.